The sequence spans 244 residues: Pyridoxine 5'-phosphate synthase (244 aa).

Residue Asn9 participates in 3-amino-2-oxopropyl phosphate binding. Position 11 to 12 (11 to 12 (DH)) interacts with 1-deoxy-D-xylulose 5-phosphate. Arg20 contributes to the 3-amino-2-oxopropyl phosphate binding site. Catalysis depends on His45, which acts as the Proton acceptor. 2 residues coordinate 1-deoxy-D-xylulose 5-phosphate: Arg47 and His52. The active-site Proton acceptor is the Glu72. Thr102 is a 1-deoxy-D-xylulose 5-phosphate binding site. The Proton donor role is filled by His193. 3-amino-2-oxopropyl phosphate-binding positions include Gly194 and 215–216 (GH).

It belongs to the PNP synthase family. As to quaternary structure, homooctamer; tetramer of dimers.

It is found in the cytoplasm. It carries out the reaction 3-amino-2-oxopropyl phosphate + 1-deoxy-D-xylulose 5-phosphate = pyridoxine 5'-phosphate + phosphate + 2 H2O + H(+). It participates in cofactor biosynthesis; pyridoxine 5'-phosphate biosynthesis; pyridoxine 5'-phosphate from D-erythrose 4-phosphate: step 5/5. Catalyzes the complicated ring closure reaction between the two acyclic compounds 1-deoxy-D-xylulose-5-phosphate (DXP) and 3-amino-2-oxopropyl phosphate (1-amino-acetone-3-phosphate or AAP) to form pyridoxine 5'-phosphate (PNP) and inorganic phosphate. The protein is Pyridoxine 5'-phosphate synthase of Blochmanniella pennsylvanica (strain BPEN).